The following is a 573-amino-acid chain: Sulfate adenylyltransferase (573 aa).

Residues 1-169 (MSNPPHGGVL…LEAVNKLQHY (169 aa)) form an N-terminal region. A catalytic region spans residues 170–394 (DFVDLRYSPA…LRESHPPRSQ (225 aa)). Residue Gln-197 participates in sulfate binding. Residues 197 to 200 (QTRN) and 291 to 294 (GRDH) each bind ATP. Catalysis depends on residues Thr-198, Arg-199, and Asn-200. Arg-199 is a binding site for sulfate. Ala-295 serves as a coordination point for sulfate. Met-333 contributes to the ATP binding site. Positions 395–573 (QGFTVLFTGY…LESQGLLDRF (179 aa)) are allosteric regulation domain; adenylyl-sulfate kinase-like. 3'-phosphoadenylyl sulfate contacts are provided by residues 434–437 (ENIR), Arg-451, 477–478 (IA), and Arg-515.

This sequence in the N-terminal section; belongs to the sulfate adenylyltransferase family. It in the C-terminal section; belongs to the APS kinase family. Homohexamer. Dimer of trimers.

The protein resides in the cytoplasm. It carries out the reaction sulfate + ATP + H(+) = adenosine 5'-phosphosulfate + diphosphate. It functions in the pathway sulfur metabolism; hydrogen sulfide biosynthesis; sulfite from sulfate: step 1/3. Its activity is regulated as follows. Allosterically inhibited by 3'-phosphoadenosine 5'-phosphosulfate (PAPS). In terms of biological role, catalyzes the first intracellular reaction of sulfate assimilation, forming adenosine-5'-phosphosulfate (APS) from inorganic sulfate and ATP. Plays an important role in sulfate activation as a component of the biosynthesis pathway of sulfur-containing amino acids. The protein is Sulfate adenylyltransferase (cys-11) of Neurospora crassa (strain ATCC 24698 / 74-OR23-1A / CBS 708.71 / DSM 1257 / FGSC 987).